A 228-amino-acid polypeptide reads, in one-letter code: Putative N-acetylmannosamine-6-phosphate 2-epimerase (228 aa).

The protein belongs to the NanE family.

The enzyme catalyses an N-acyl-D-glucosamine 6-phosphate = an N-acyl-D-mannosamine 6-phosphate. The protein operates within amino-sugar metabolism; N-acetylneuraminate degradation; D-fructose 6-phosphate from N-acetylneuraminate: step 3/5. Converts N-acetylmannosamine-6-phosphate (ManNAc-6-P) to N-acetylglucosamine-6-phosphate (GlcNAc-6-P). This Mycoplasmopsis pulmonis (strain UAB CTIP) (Mycoplasma pulmonis) protein is Putative N-acetylmannosamine-6-phosphate 2-epimerase.